Reading from the N-terminus, the 253-residue chain is Ciliary microtubule associated protein 1B (253 aa).

One copy of the STPGR repeat lies at 182 to 207 (PGPCAYQVVSPGVYKSRAPQFTILAR).

It belongs to the CIMAP family.

It is found in the cell projection. It localises to the cilium. The protein localises to the flagellum. This Homo sapiens (Human) protein is Ciliary microtubule associated protein 1B.